Consider the following 289-residue polypeptide: Shikimate kinase (289 aa).

Position 84–94 (84–94 (PMASGLSSSSA)) interacts with ATP.

It belongs to the GHMP kinase family. Archaeal shikimate kinase subfamily.

The protein resides in the cytoplasm. It carries out the reaction shikimate + ATP = 3-phosphoshikimate + ADP + H(+). It participates in metabolic intermediate biosynthesis; chorismate biosynthesis; chorismate from D-erythrose 4-phosphate and phosphoenolpyruvate: step 5/7. This Methanobrevibacter smithii (strain ATCC 35061 / DSM 861 / OCM 144 / PS) protein is Shikimate kinase.